Reading from the N-terminus, the 274-residue chain is 3-methyl-2-oxobutanoate hydroxymethyltransferase (274 aa).

Asp44 and Asp83 together coordinate Mg(2+). 3-methyl-2-oxobutanoate contacts are provided by residues 44 to 45 (DS), Asp83, and Lys113. Residue Glu115 coordinates Mg(2+). Glu182 (proton acceptor) is an active-site residue.

It belongs to the PanB family. As to quaternary structure, homodecamer; pentamer of dimers. The cofactor is Mg(2+).

It localises to the cytoplasm. It carries out the reaction 3-methyl-2-oxobutanoate + (6R)-5,10-methylene-5,6,7,8-tetrahydrofolate + H2O = 2-dehydropantoate + (6S)-5,6,7,8-tetrahydrofolate. It participates in cofactor biosynthesis; (R)-pantothenate biosynthesis; (R)-pantoate from 3-methyl-2-oxobutanoate: step 1/2. Functionally, catalyzes the reversible reaction in which hydroxymethyl group from 5,10-methylenetetrahydrofolate is transferred onto alpha-ketoisovalerate to form ketopantoate. The polypeptide is 3-methyl-2-oxobutanoate hydroxymethyltransferase (Campylobacter jejuni subsp. jejuni serotype O:6 (strain 81116 / NCTC 11828)).